We begin with the raw amino-acid sequence, 119 residues long: Hisactophilin-3 (119 aa).

Glycine 2 is lipidated: N-myristoyl glycine. The interval serine 8–histidine 110 is contains several HHXH repeats. 2 consecutive repeat copies span residues phenylalanine 34–arginine 47 and phenylalanine 75–lysine 87. The 2 X 13 AA approximate repeats stretch occupies residues phenylalanine 34–lysine 87.

Belongs to the hisactophilin family. In terms of processing, phosphorylated.

The protein resides in the cytoplasm. It is found in the cell membrane. May act as an intracellular pH sensor that links chemotactic signals to responses in the microfilament system of the cells by nucleating actin polymerization or stabilizing the filaments. This Dictyostelium discoideum (Social amoeba) protein is Hisactophilin-3 (hatC).